The sequence spans 265 residues: Chlorophyll a-b binding protein 1C, chloroplastic (265 aa).

The N-terminal 34 residues, Met-1–Thr-34, are a transit peptide targeting the chloroplast. A helical membrane pass occupies residues Leu-151 to Val-171. Val-152, Ser-156, Gln-164, Glu-172, Arg-175, and Leu-181 together coordinate chlorophyll b. Positions 212, 213, 216, 218, 230, 245, and 254 each coordinate chlorophyll a. A helical transmembrane segment spans residues Leu-219–Leu-239. Phe-261 contacts chlorophyll b.

The protein belongs to the light-harvesting chlorophyll a/b-binding (LHC) protein family. The LHC complex consists of chlorophyll a-b binding proteins. Binds at least 14 chlorophylls (8 Chl-a and 6 Chl-b) and carotenoids such as lutein and neoxanthin. serves as cofactor. In terms of processing, photoregulated by reversible phosphorylation of its threonine residues.

The protein localises to the plastid. Its subcellular location is the chloroplast thylakoid membrane. Functionally, the light-harvesting complex (LHC) functions as a light receptor, it captures and delivers excitation energy to photosystems with which it is closely associated. The polypeptide is Chlorophyll a-b binding protein 1C, chloroplastic (CAB1C) (Solanum lycopersicum (Tomato)).